The following is a 175-amino-acid chain: Protein CENTRORADIALIS-like (175 aa).

The protein belongs to the phosphatidylethanolamine-binding protein family. As to expression, expressed in tissues surrounding vascular bundles in hypocotyl of 2-week-old plants.

The protein localises to the cytoplasm. May form complexes with phosphorylated ligands by interfering with kinases and their effectors. Can substitute for TERMINAL FLOWER 1 (in vitro). The protein is Protein CENTRORADIALIS-like (CEN) of Arabidopsis thaliana (Mouse-ear cress).